A 327-amino-acid polypeptide reads, in one-letter code: 2-methoxy-6-polyprenyl-1,4-benzoquinol methylase, mitochondrial (327 aa).

The N-terminal 42 residues, 1–42, are a transit peptide targeting the mitochondrion; sequence MAAPGSCALWSYCGRGWSRAMRGCQLLGLRSSWPGDLLSARL. Residues Thr117, Asp171, and 199 to 200 contribute to the S-adenosyl-L-methionine site; that span reads DA.

This sequence belongs to the class I-like SAM-binding methyltransferase superfamily. MenG/UbiE family. As to quaternary structure, component of a multi-subunit COQ enzyme complex, composed of at least COQ3, COQ4, COQ5, COQ6, COQ7 and COQ9. Interacts with PYURF; the interaction is direct, stabilizes COQ5 protein and associates PYURF with COQ enzyme complex. Widely expressed, with highest levels in liver, lung, placenta and skeletal muscle.

The protein resides in the mitochondrion inner membrane. The catalysed reaction is 2-methoxy-6-(all-trans-decaprenyl)benzene-1,4-diol + S-adenosyl-L-methionine = 5-methoxy-2-methyl-3-(all-trans-decaprenyl)benzene-1,4-diol + S-adenosyl-L-homocysteine + H(+). The protein operates within cofactor biosynthesis; ubiquinone biosynthesis. Methyltransferase required for the conversion of 2-decaprenyl-6-methoxy-1,4-benzoquinol (DDMQH2) to 2-decaprenyl-3-methyl-6-methoxy-1,4-benzoquinol (DMQH2). In Homo sapiens (Human), this protein is 2-methoxy-6-polyprenyl-1,4-benzoquinol methylase, mitochondrial.